Here is a 1099-residue protein sequence, read N- to C-terminus: Solute carrier family 12 member 1 (1099 aa).

Over 1–177 (MSLNNSSSVF…EDNKAGAVKF (177 aa)) the chain is Cytoplasmic. An RFXV motif motif is present at residues 20 to 23 (RFQV). Ser-60 and Ser-90 each carry phosphoserine. Phosphothreonine is present on residues Thr-94, Thr-99, Thr-104, and Thr-117. Position 119 is a phosphoserine (Ser-119). Residue Ser-129 is modified to Phosphoserine; by AMPK. The residue at position 147 (Ser-147) is a Phosphoserine. Positions 147-169 (SADRVANGEGMPGEEHAENKEED) are disordered. Positions 159 to 169 (GEEHAENKEED) are enriched in basic and acidic residues. A helical transmembrane segment spans residues 178 to 198 (GWVKGVLVRCMLNIWGVMLFI). Residues 199–201 (RLS) are Extracellular-facing. The helical transmembrane segment at 202–222 (WIVGEAGIGLGVVIILLSTMV) threads the bilayer. Residues 223–259 (TSITGLSTSAIATNGFVRGGGAYYLISRSLGPEFGGS) lie on the Cytoplasmic side of the membrane. Residues 260–280 (IGLIFAFANAVAVAMYVVGFA) traverse the membrane as a helical segment. Topologically, residues 281–302 (ETVVDLLKESDSMMVDPTNDIR) are extracellular. The helical transmembrane segment at 303-323 (IIGSITVVILLGISVAGMEWE) threads the bilayer. The Cytoplasmic segment spans residues 324–327 (AKAQ). The helical transmembrane segment at 328–348 (VILLIILLIAIANFFIGTVIP) threads the bilayer. Residues 349-379 (SNNEKKSRGFFNYQASIFAENFGPSFTKGEG) lie on the Extracellular side of the membrane. A helical transmembrane segment spans residues 380 to 400 (FFSVFAIFFPAATGILAGANI). The Cytoplasmic segment spans residues 401 to 417 (SGDLEDPQDAIPRGTML). A helical transmembrane segment spans residues 418-438 (AIFITTVAYIGVAICVGACVV). The Extracellular portion of the chain corresponds to 439 to 550 (RDATGSMNDT…NNEPLRGYIL (112 aa)). Residues Asn-446 and Asn-456 are each glycosylated (N-linked (GlcNAc...) asparagine). The next 2 helical transmembrane spans lie at 551-571 (TFVI…APII) and 572-592 (SNFF…ASYA). At 593 to 609 (KSPGWRPAYGIYNMWVS) the chain is on the extracellular side. The chain crosses the membrane as a helical span at residues 610–630 (LFGAVLCCAVMFVINWWAAVI). The Cytoplasmic portion of the chain corresponds to 631–1099 (TYVIEFFLYI…NHKNVLTFYS (469 aa)).

The protein belongs to the SLC12A transporter family. When phosphorylated, interacts with PPP3CB. Phosphorylated at Ser-90, Thr-99 and Thr-104 by OXSR1/OSR1 and STK39/SPAK downstream of WNK kinases (WNK1, WNK2, WNK3 or WNK4), promoting its activity. Predominant in kidney. The 3 isoforms are differentially distributed within the kidney: B almost exclusively in cortex, F almost exclusively in medulla, and A about equally distributed.

Its subcellular location is the apical cell membrane. It carries out the reaction K(+)(out) + 2 chloride(out) + Na(+)(out) = K(+)(in) + 2 chloride(in) + Na(+)(in). With respect to regulation, activated following phosphorylation by OXSR1/OSR1 and STK39/SPAK downstream of WNK kinases (WNK1, WNK2, WNK3 or WNK4). Its function is as follows. Renal sodium, potassium and chloride ion cotransporter that mediates the transepithelial NaCl reabsorption in the thick ascending limb and plays an essential role in the urinary concentration and volume regulation. Electrically silent transporter system. This is Solute carrier family 12 member 1 (SLC12A1) from Oryctolagus cuniculus (Rabbit).